Here is a 126-residue protein sequence, read N- to C-terminus: Large ribosomal subunit protein bL12 (126 aa).

The protein belongs to the bacterial ribosomal protein bL12 family. As to quaternary structure, homodimer. Part of the ribosomal stalk of the 50S ribosomal subunit. Forms a multimeric L10(L12)X complex, where L10 forms an elongated spine to which 2 to 4 L12 dimers bind in a sequential fashion. Binds GTP-bound translation factors.

Functionally, forms part of the ribosomal stalk which helps the ribosome interact with GTP-bound translation factors. Is thus essential for accurate translation. The chain is Large ribosomal subunit protein bL12 from Paracidovorax citrulli (strain AAC00-1) (Acidovorax citrulli).